Reading from the N-terminus, the 294-residue chain is 4-hydroxy-tetrahydrodipicolinate synthase (294 aa).

T45 is a binding site for pyruvate. Y133 acts as the Proton donor/acceptor in catalysis. K161 (schiff-base intermediate with substrate) is an active-site residue. I203 contributes to the pyruvate binding site.

This sequence belongs to the DapA family. Homotetramer; dimer of dimers.

It is found in the cytoplasm. It carries out the reaction L-aspartate 4-semialdehyde + pyruvate = (2S,4S)-4-hydroxy-2,3,4,5-tetrahydrodipicolinate + H2O + H(+). Its pathway is amino-acid biosynthesis; L-lysine biosynthesis via DAP pathway; (S)-tetrahydrodipicolinate from L-aspartate: step 3/4. Functionally, catalyzes the condensation of (S)-aspartate-beta-semialdehyde [(S)-ASA] and pyruvate to 4-hydroxy-tetrahydrodipicolinate (HTPA). This Shewanella pealeana (strain ATCC 700345 / ANG-SQ1) protein is 4-hydroxy-tetrahydrodipicolinate synthase.